We begin with the raw amino-acid sequence, 343 residues long: Methylthioribose-1-phosphate isomerase (343 aa).

Residues 48 to 50, R88, and Q193 contribute to the substrate site; that span reads RGA. Residue D234 is the Proton donor of the active site. 244-245 is a binding site for substrate; that stretch reads NK.

The protein belongs to the eIF-2B alpha/beta/delta subunits family. MtnA subfamily.

The enzyme catalyses 5-(methylsulfanyl)-alpha-D-ribose 1-phosphate = 5-(methylsulfanyl)-D-ribulose 1-phosphate. It functions in the pathway amino-acid biosynthesis; L-methionine biosynthesis via salvage pathway; L-methionine from S-methyl-5-thio-alpha-D-ribose 1-phosphate: step 1/6. In terms of biological role, catalyzes the interconversion of methylthioribose-1-phosphate (MTR-1-P) into methylthioribulose-1-phosphate (MTRu-1-P). In Thermotoga petrophila (strain ATCC BAA-488 / DSM 13995 / JCM 10881 / RKU-1), this protein is Methylthioribose-1-phosphate isomerase.